Here is a 465-residue protein sequence, read N- to C-terminus: Sperm microtubule associated protein 2-like (465 aa).

Over residues 1–29 (MENQEFLSSSAPSEVTDGQVSTEISTCSE) the composition is skewed to polar residues. The segment at 1–140 (MENQEFLSSS…REAKETELLP (140 aa)) is disordered. Composition is skewed to basic and acidic residues over residues 40–70 (LDTHRELEESEDPEKHENPEEPEEVREQDQR) and 114–137 (KAREPRQLRHTREPRKSREAKETE). 8 THEG repeats span residues 174–192 (RKCFSSRKRTPNLSKPKKQ), 214–233 (GALKAQLTKRLENLAQPKEV), 260–279 (PALFRQPSKRIQRLSQPNGF), 297–316 (SLRISDPSPRILQLSVAKGT), 333–352 (STLSAIATPRIIELAHPRIK), 373–392 (AAMIAKPSPRTIALAKSKSV), 409–428 (ATTHSKASPRIQELANPNKR), and 446–465 (AALKAQCSQRIWELSQPLTR).

This is Sperm microtubule associated protein 2-like from Homo sapiens (Human).